Reading from the N-terminus, the 639-residue chain is Serine/threonine-protein kinase PAK mbt (639 aa).

Positions 11 to 24 constitute a CRIB domain; sequence ISMPSNFEHRVHTG. The tract at residues 25-367 is linker; that stretch reads FDKRENKYVG…VVSAGDPREN (343 aa). Disordered regions lie at residues 79 to 195 and 222 to 345; these read HHNN…SLLY and RSNL…QDQR. Composition is skewed to low complexity over residues 91 to 129, 138 to 159, 227 to 241, and 274 to 295; these read NSSS…ETGG, VARS…ANVP, PPSG…QTSP, and QQQQ…NPLH. Positions 296–308 are enriched in basic residues; the sequence is PHAHPHPHHHQHL. The segment covering 309–331 has biased composition (low complexity); sequence AKSASRASSSSGGASSAAQQASG. The 252-residue stretch at 368 to 619 folds into the Protein kinase domain; it reads LDHFNKIGEG…AAELLAHPFL (252 aa). ATP contacts are provided by residues 374-382 and Lys397; that span reads IGEGSTGTV. Asp487 (proton acceptor) is an active-site residue. Ser521 is modified (phosphoserine). Residue Thr525 is modified to Phosphothreonine.

Belongs to the protein kinase superfamily. STE Ser/Thr protein kinase family. STE20 subfamily. As to quaternary structure, interacts tightly with GTP-bound but not GDP-bound Cdc42 and weakly with Rac1. Mg(2+) serves as cofactor. Autophosphorylated when activated by Cdc42. In terms of tissue distribution, expressed in adult brain and eye. High levels detected in developing photoreceptor cells and future bristle cells, and lower levels in cone and pigment cells, as detected in third instar eye imaginal disks (at protein level).

The protein resides in the cell junction. The protein localises to the adherens junction. It localises to the cell membrane. It carries out the reaction L-seryl-[protein] + ATP = O-phospho-L-seryl-[protein] + ADP + H(+). The enzyme catalyses L-threonyl-[protein] + ATP = O-phospho-L-threonyl-[protein] + ADP + H(+). Functionally, involved in neurogenesis of the adult central nervous system, and together with Cdc42, regulates photoreceptor cell morphogenesis. Phosphorylates exogenous substrates when activated by Cdc42. This Drosophila melanogaster (Fruit fly) protein is Serine/threonine-protein kinase PAK mbt.